Consider the following 247-residue polypeptide: Proteasome subunit alpha type-7 (247 aa).

Belongs to the peptidase T1A family. The 26S proteasome consists of a 20S proteasome core and two 19S regulatory subunits. The 20S proteasome core is composed of 28 subunits that are arranged in four stacked rings, resulting in a barrel-shaped structure. The two end rings are each formed by seven alpha subunits, and the two central rings are each formed by seven beta subunits. The catalytic chamber with the active sites is on the inside of the barrel.

The protein resides in the cytoplasm. It localises to the nucleus. Functionally, the proteasome is a multicatalytic proteinase complex which is characterized by its ability to cleave peptides with Arg, Phe, Tyr, Leu, and Glu adjacent to the leaving group at neutral or slightly basic pH. The proteasome has an ATP-dependent proteolytic activity. This Trypanosoma brucei brucei protein is Proteasome subunit alpha type-7 (PSA4).